An 898-amino-acid polypeptide reads, in one-letter code: Netrin receptor UNC5A (898 aa).

A signal peptide spans 1-25 (MAVRPGLWPVLLGIVLAAWLRGSGA). The Extracellular segment spans residues 26-361 (QQSATVANPV…TASCPEDVAL (336 aa)). The 98-residue stretch at 44–141 (PHFLVEPEDV…SGTTKSQKAY (98 aa)) folds into the Ig-like domain. 3 disulfides stabilise this stretch: cysteine 65–cysteine 126, cysteine 77–cysteine 124, and cysteine 170–cysteine 221. Asparagine 107 and asparagine 218 each carry an N-linked (GlcNAc...) asparagine glycan. The region spanning 155–238 (PLAKEVSLEQ…RRRSTSAAVI (84 aa)) is the Ig-like C2-type domain. 2 consecutive TSP type-1 domains span residues 242-296 (NGGW…TLCP) and 298-350 (DGSW…DLCL). Tryptophan 245, tryptophan 248, and tryptophan 251 each carry a C-linked (Man) tryptophan glycan. 3 disulfides stabilise this stretch: cysteine 254–cysteine 291, cysteine 258–cysteine 295, and cysteine 269–cysteine 281. 2 C-linked (Man) tryptophan glycosylation sites follow: tryptophan 301 and tryptophan 304. Disulfide bonds link cysteine 310-cysteine 344, cysteine 314-cysteine 349, and cysteine 322-cysteine 334. Residue asparagine 343 is glycosylated (N-linked (GlcNAc...) asparagine). Residues 362 to 382 (YIGLVAVAVCLFLLLLALGLI) traverse the membrane as a helical segment. The Cytoplasmic portion of the chain corresponds to 383-898 (YCRKKEGLDS…GLFTVSEAEC (516 aa)). The 144-residue stretch at 497–640 (NMAYGTFNFL…LGRFALVGEA (144 aa)) folds into the ZU5 domain. The segment at 661–679 (SLEYNIRVYCLHDTHDALK) is interaction with DCC. One can recognise a Death domain in the interval 817-897 (QKIIASLDPP…AGLFTVSEAE (81 aa)).

The protein belongs to the unc-5 family. Homodimer and homooligomer. Interacts with the cytoplasmic part of DCC. Interacts with MAGED1. Interacts with PRKCABP, possibly mediating some interaction with PKC. Interacts (via extracellular domain) with FLRT2 (via extracellular domain). Interacts (via extracellular domain) with FLRT3 (via extracellular domain). In terms of processing, phosphorylated on cytoplasmic tyrosine residues. Phosphorylated by PKC in vitro. Post-translationally, proteolytically cleaved by caspases during apoptosis. The cleavage does not take place when the receptor is associated with netrin ligand. Its cleavage by caspases is required to induce apoptosis. The two extracellular TSRs of UNC5A contain WxxWxxWxxC motifs that can be C-mannosylated on all tryptophans. DPY19L1 preferentially mannosylates the first two tryptophans and DPY19L3 prefers the third. C-mannosylation by DPY19L1 is required for transport of UNC5A from the endoplasmic reticulum to the cell surface. In terms of tissue distribution, mainly expressed in regions of differentiating neurons. Expressed at early stages of neural tube development in the ventral spinal cord. In developing hindbrain, it colocalizes with a number of cranial motor neuron subpopulations from embryonic E11 to E14, while DCC is expressed by motor neurons at E12. Also expressed in non-neural structures, such as the basal plane of the hindbrain and midbrain, in the developing hypothalamus, thalamus and in the pallidum.

The protein resides in the cell membrane. It is found in the membrane raft. Its subcellular location is the cell projection. It localises to the neuron projection. Functionally, receptor for netrin required for axon guidance. Functions in the netrin signaling pathway and promotes neurite outgrowth in response to NTN1. Mediates axon repulsion of neuronal growth cones in the developing nervous system in response to netrin. Axon repulsion in growth cones may be mediated by its association with DCC that may trigger signaling for repulsion. It also acts as a dependence receptor required for apoptosis induction when not associated with netrin ligand. This is Netrin receptor UNC5A (Unc5a) from Rattus norvegicus (Rat).